Here is a 116-residue protein sequence, read N- to C-terminus: Non-specific lipid-transfer protein 5 (116 aa).

The N-terminal stretch at Met-1 to Gly-24 is a signal peptide. Cystine bridges form between Cys-28-Cys-75, Cys-38-Cys-52, Cys-53-Cys-98, and Cys-73-Cys-112.

This sequence belongs to the plant LTP family.

Plant non-specific lipid-transfer proteins transfer phospholipids as well as galactolipids across membranes. May play a role in wax or cutin deposition in the cell walls of expanding epidermal cells and certain secretory tissues. The sequence is that of Non-specific lipid-transfer protein 5 from Lens culinaris (Lentil).